Reading from the N-terminus, the 159-residue chain is Putative viral CXC chemokine 2 (159 aa).

2 cysteine pairs are disulfide-bonded: cysteine 50–cysteine 77 and cysteine 52–cysteine 93.

Belongs to the intercrine alpha (chemokine CxC) family.

In Human cytomegalovirus (strain Merlin) (HHV-5), this protein is Putative viral CXC chemokine 2 (UL147).